The primary structure comprises 154 residues: Myoglobin (154 aa).

The Globin domain occupies 2-148; that stretch reads VLSEGEWQLV…FRKDIAAKYK (147 aa). Ser-4 bears the Phosphoserine mark. His-65 provides a ligand contact to nitrite. Position 65 (His-65) interacts with O2. Phosphothreonine is present on Thr-68. A heme b-binding site is contributed by His-94.

The protein belongs to the globin family. In terms of assembly, monomeric.

It localises to the cytoplasm. It is found in the sarcoplasm. The catalysed reaction is Fe(III)-heme b-[protein] + nitric oxide + H2O = Fe(II)-heme b-[protein] + nitrite + 2 H(+). It catalyses the reaction H2O2 + AH2 = A + 2 H2O. Monomeric heme protein which primary function is to store oxygen and facilitate its diffusion within muscle tissues. Reversibly binds oxygen through a pentacoordinated heme iron and enables its timely and efficient release as needed during periods of heightened demand. Depending on the oxidative conditions of tissues and cells, and in addition to its ability to bind oxygen, it also has a nitrite reductase activity whereby it regulates the production of bioactive nitric oxide. Under stress conditions, like hypoxia and anoxia, it also protects cells against reactive oxygen species thanks to its pseudoperoxidase activity. This is Myoglobin (MB) from Kogia breviceps (Pygmy sperm whale).